A 749-amino-acid polypeptide reads, in one-letter code: Amyloid-beta A4 precursor protein-binding family A member 2 (749 aa).

Disordered regions lie at residues 1 to 94 (MAHR…PEEE), 130 to 220 (DTDE…GDLE), and 238 to 344 (SMTS…NIPE). A Phosphoserine modification is found at S11. The span at 70–80 (GDSSSDYVNNT) shows a compositional bias: polar residues. 2 stretches are compositionally biased toward acidic residues: residues 81–94 (SEEEDYDEGLPEEE) and 131–142 (TDECQEAVEEWT). The interval 185 to 270 (HYCASKEGYQ…SVEACPPIKA (86 aa)) is STXBP1-binding. S208 is modified (phosphoserine). Polar residues predominate over residues 238–247 (SMTSITSASE). Over residues 305-315 (RTPEERLKWPH) the composition is skewed to basic and acidic residues. Residues 368 to 555 (DGIIFAANYL…IINTQEMYND (188 aa)) form the PID domain. PDZ domains follow at residues 568–654 (ELQL…IVSC) and 659–734 (TVLI…TMPA).

As to quaternary structure, part of a multimeric complex containing STXBP1 and syntaxin-1. Binds to the cytoplasmic domain of amyloid-beta protein, and to the nuclear factor NF-kappa-B/p65 via its PDZ domain. Interacts with the N-terminal domain of NECAB3. Brain.

Functionally, putative function in synaptic vesicle exocytosis by binding to STXBP1, an essential component of the synaptic vesicle exocytotic machinery. May modulate processing of the amyloid-beta precursor protein (APP) and hence formation of APP-beta. The sequence is that of Amyloid-beta A4 precursor protein-binding family A member 2 (APBA2) from Homo sapiens (Human).